Consider the following 351-residue polypeptide: Peptidyl-Lys metalloendopeptidase (351 aa).

The first 22 residues, 1–22 (MFSLSSRFFLYSLCLSAVAVSA), serve as a signal peptide directing secretion. Residues 23–183 (APGLSLSLSG…VARRSNLGKR (161 aa)) constitute a propeptide that is removed on maturation. Intrachain disulfides connect C189-C259 and C261-C281. H301 is a Zn(2+) binding site. E302 is an active-site residue. Residues H305 and D314 each coordinate Zn(2+).

This sequence belongs to the peptidase M35 family. Zn(2+) is required as a cofactor.

It is found in the secreted. It carries out the reaction Preferential cleavage in proteins: -Xaa-|-Lys- (in which Xaa may be Pro).. Its activity is regulated as follows. Inhibited by chelating agents such as imidazole, alpha,alpha'-bipyridine, and 1,10-phenanthroline. This Armillaria mellea (Honey mushroom) protein is Peptidyl-Lys metalloendopeptidase (MEP).